Here is a 202-residue protein sequence, read N- to C-terminus: Heart- and neural crest derivatives-expressed protein 1 (202 aa).

In terms of domain architecture, bHLH spans 83 to 135 (RKGVGGPKKERRRTESINSAFAELRECIPNVPADTKLSKIKTLRLATSYIAYL). Residues 143–187 (SQPGEPEGFKAELKKADGRENKRKRETQPEVYSQPLAHGEKKLKG) form a disordered region. Over residues 149-162 (EGFKAELKKADGRE) the composition is skewed to basic and acidic residues.

As to quaternary structure, efficient DNA binding requires dimerization with another bHLH protein.

The protein resides in the nucleus. It localises to the nucleoplasm. The protein localises to the nucleolus. Transcription factor. Plays an essential role in cardiac morphogenesis. The sequence is that of Heart- and neural crest derivatives-expressed protein 1 (HAND1) from Gallus gallus (Chicken).